Reading from the N-terminus, the 431-residue chain is MEDFNASLGPAVCRICMCGETSIPYLGQQAGEPLISPCKCSGTMGLFHRSCLEHWLTLTSTTNCEICKFAFKIKQKSRNFIDYIRQGGYKKLQSNRNPFIDFAFVLLILPFAFFGVFMSVEGALYAGRKYHYAFENRDNDENGNLEVRNQTSLECALFLFVALLLFSAFITLVVSALWHHFRQYKIWQAKNKIMFVVDQLDAEQSMHFNPQWKKQGGGWKEKIAKFWGEIRRRPTRAYIPEIARNDSIPIEPVVGISPVLVANFNRTSPDSNNTHHHDESRNEIPFGRRTPEQAICVSMSSTPQMYAEKLEKLTLSPIGLDDLFANSRATSTRRESGISPESSSRRDMRKTHSVYSVCSSFGTGVMSCSTPVADNNLRTLTPSPISLSTFKSGCPTEPVVAINLNDSGDTVTIDSQRGRFHVETLENDYNS.

The RING-CH-type zinc-finger motif lies at 5–74 (NASLGPAVCR…EICKFAFKIK (70 aa)). Zn(2+)-binding residues include Cys-13, Cys-16, Cys-38, Cys-40, His-48, Cys-51, Cys-64, and Cys-67. The next 2 helical transmembrane spans lie at 98-118 (PFID…GVFM) and 157-177 (LFLF…VSAL). Disordered stretches follow at residues 267–289 (TSPD…FGRR) and 327–349 (SRAT…RDMR). A compositionally biased stretch (basic and acidic residues) spans 273–282 (NTHHHDESRN).

The protein resides in the cell membrane. It is found in the endosome membrane. It catalyses the reaction S-ubiquitinyl-[E2 ubiquitin-conjugating enzyme]-L-cysteine + [acceptor protein]-L-lysine = [E2 ubiquitin-conjugating enzyme]-L-cysteine + N(6)-ubiquitinyl-[acceptor protein]-L-lysine.. The protein operates within protein modification; protein ubiquitination. In terms of biological role, E3 ubiquitin-protein ligase which positively regulates the fast polyspermy block during fertilization, preventing entry of more than one sperm into the oocyte. After fertilization, required in the zygote for the selective degradation of a subset of maternal membrane proteins including cav-1, chs-1 and rme-2, probably by mediating their K63-linked polyubiquitination. The polypeptide is E3 ubiquitin-protein ligase marc-3 (Caenorhabditis elegans).